Here is a 926-residue protein sequence, read N- to C-terminus: UvrABC system protein A (926 aa).

Residue 31 to 38 participates in ATP binding; that stretch reads GPSGSGKS. The segment at 251–278 adopts a C4-type zinc-finger fold; that stretch reads CPEHGFSIPELSARLFSFNSPYGACPSC. ABC transporter domains lie at 308 to 568 and 588 to 916; these read SGYF…PSSL and PSGK…KYLR. 620–627 is an ATP binding site; that stretch reads GVSGSGKS. Residues 719–745 form a C4-type zinc finger; the sequence is CEACQGEGVIKVEMHFLPPVYVTCEVC.

Belongs to the ABC transporter superfamily. UvrA family. Forms a heterotetramer with UvrB during the search for lesions.

It localises to the cytoplasm. The UvrABC repair system catalyzes the recognition and processing of DNA lesions. UvrA is an ATPase and a DNA-binding protein. A damage recognition complex composed of 2 UvrA and 2 UvrB subunits scans DNA for abnormalities. When the presence of a lesion has been verified by UvrB, the UvrA molecules dissociate. In Aquifex aeolicus (strain VF5), this protein is UvrABC system protein A.